Consider the following 411-residue polypeptide: Lycopene beta cyclase (411 aa).

4–32 contacts NAD(+); the sequence is ALVIGSGPAGLAIAAELAQRGLKVQGLSP.

The protein belongs to the lycopene cyclase family. It depends on FAD as a cofactor.

It catalyses the reaction a carotenoid psi-end group = a carotenoid beta-end derivative. It carries out the reaction all-trans-lycopene = gamma-carotene. The enzyme catalyses gamma-carotene = all-trans-beta-carotene. The catalysed reaction is all-trans-neurosporene = beta-zeacarotene. It functions in the pathway carotenoid biosynthesis; beta-carotene biosynthesis. The protein operates within carotenoid biosynthesis; beta-zeacarotene biosynthesis. Its activity is regulated as follows. Inhibited by the bleaching herbicide 2-(4-methylphenoxy)triethylamine hydrochloride (MPTA). In terms of biological role, catalyzes the double cyclization reaction which converts lycopene to beta-carotene. It also converts neurosporene to the monocyclic beta-zeacarotene but does not cyclize zeta-carotene. This chain is Lycopene beta cyclase, found in Synechococcus elongatus (strain ATCC 33912 / PCC 7942 / FACHB-805) (Anacystis nidulans R2).